Here is a 235-residue protein sequence, read N- to C-terminus: Transcription factor MYB59 (235 aa).

2 HTH myb-type domains span residues 5–57 (QEEY…VNYL) and 58–112 (HPGL…RKKA). Residues 33 to 57 (WDFVAKVSGLNRTGKSCRLRWVNYL) constitute a DNA-binding region (H-T-H motif). The Bipartite nuclear localization signal 1 motif lies at 62–65 (KRGK). The H-T-H motif DNA-binding region spans 85–108 (WSKIARKLPGRTDNEIKNYWRTHM). The short motif at 109–117 (RKKAQEKKR) is the Bipartite nuclear localization signal 2 element. Residues 109–147 (RKKAQEKKRPMSPTSSSSNCCSSSMTTTTSQDTGGSNGK) form a disordered region. The segment covering 119 to 138 (MSPTSSSSNCCSSSMTTTTS) has biased composition (low complexity).

Mainly expressed in leaves and seedlings, and to a lower extent, in roots, stems and inflorescences. Isoform MYB59-1 and isoform MYB59-2 are present in roots, leaves, and seedlings, while the expression of isoform MYB59-3 and isoform MYB59-4 is confined to seedlings.

The protein resides in the nucleus. In terms of biological role, transcription factor. The polypeptide is Transcription factor MYB59 (MYB59) (Arabidopsis thaliana (Mouse-ear cress)).